Here is an 85-residue protein sequence, read N- to C-terminus: UPF0291 protein str0508 (85 aa).

Residues 62–85 (TPEKLRQVQREKGLHGRSLDDPES) are disordered.

The protein belongs to the UPF0291 family.

Its subcellular location is the cytoplasm. This Streptococcus thermophilus (strain CNRZ 1066) protein is UPF0291 protein str0508.